A 551-amino-acid chain; its full sequence is Oleuropein beta-glucosidase (551 aa).

A compositionally biased stretch (polar residues) spans 1–27 (MDIQSNVLTITSGSTPTDTSSNGQAAK). Residues 1–33 (MDIQSNVLTITSGSTPTDTSSNGQAAKSTKERI) are disordered. A beta-D-glucoside contacts are provided by residues Gln52, His156, 201 to 202 (NE), Tyr363, Glu433, Trp482, 489 to 490 (EW), and Phe498. The active-site Proton donor is the Glu202. Glu433 (nucleophile) is an active-site residue. The segment at 502–551 (YVDYANGRYTRLPKRSAVWWRNFLTKPTAVPLKNEPEKSEDRRKRLRGST) is required for the homomultimerization. Residues 532–551 (PLKNEPEKSEDRRKRLRGST) are disordered. Residues 535 to 544 (NEPEKSEDRR) are compositionally biased toward basic and acidic residues. Positions 542–550 (DRRKRLRGS) match the Nuclear localization signal motif.

This sequence belongs to the glycosyl hydrolase 1 family. In terms of assembly, homomultimer. Native form of the enzyme requires at least an octamer conformation. Expressed in expanding leaves and in young drupes, mostly in the developing seed coat tissues, the perisperm and the mesocarp. Also detected in shoot and root meristems, flower buds, developing ovaries and tapetal cells of the anther. Not detected in embryos or endosperm, or in leaf trichomes.

Its subcellular location is the nucleus. The enzyme catalyses oleuropein + H2O = oleuropein aglycone + D-glucose. Functionally, major beta-glucosidase activating oleuropein into a potent protein cross-linking agent. No activity with rutin, luteolin or p-nitrophenyl-beta-glucopyranoside as substrates. This is Oleuropein beta-glucosidase from Olea europaea (Common olive).